The sequence spans 474 residues: tRNA-2-methylthio-N(6)-dimethylallyladenosine synthase (474 aa).

The MTTase N-terminal domain occupies 3–120 (QKLHIKTWGC…LPEMINQIRG (118 aa)). [4Fe-4S] cluster is bound by residues Cys-12, Cys-49, Cys-83, Cys-157, Cys-161, and Cys-164. The 233-residue stretch at 143–375 (RAEGPTAFVS…QQRINNQAAQ (233 aa)) folds into the Radical SAM core domain. Positions 378–441 (RAMLGTEQRV…TNSLRGEVVR (64 aa)) constitute a TRAM domain.

It belongs to the methylthiotransferase family. MiaB subfamily. In terms of assembly, monomer. It depends on [4Fe-4S] cluster as a cofactor.

The protein localises to the cytoplasm. It carries out the reaction N(6)-dimethylallyladenosine(37) in tRNA + (sulfur carrier)-SH + AH2 + 2 S-adenosyl-L-methionine = 2-methylsulfanyl-N(6)-dimethylallyladenosine(37) in tRNA + (sulfur carrier)-H + 5'-deoxyadenosine + L-methionine + A + S-adenosyl-L-homocysteine + 2 H(+). Functionally, catalyzes the methylthiolation of N6-(dimethylallyl)adenosine (i(6)A), leading to the formation of 2-methylthio-N6-(dimethylallyl)adenosine (ms(2)i(6)A) at position 37 in tRNAs that read codons beginning with uridine. The sequence is that of tRNA-2-methylthio-N(6)-dimethylallyladenosine synthase from Histophilus somni (strain 129Pt) (Haemophilus somnus).